The following is a 146-amino-acid chain: VHLTPEEKALVIGLWAKVNVKEYGGEALGRLLVVYPWTQRFFEHFGDLSSASAIMNNPKVKAHGEKVFTSFGDGLKHLEDLKGAFAELSELHCDKLHVDPENFRLLGNVLVCVLARHFGKEFSPEAQAAYQKVVAGVANALAHKYH.

At valine 1 the chain carries N-acetylvaline. The region spanning 2 to 146 (HLTPEEKALV…VANALAHKYH (145 aa)) is the Globin domain. Position 59 is an N6-acetyllysine (lysine 59). Histidine 63 serves as a coordination point for heme b. Residue lysine 82 is modified to N6-acetyllysine. Histidine 92 serves as a coordination point for heme b. S-nitrosocysteine is present on cysteine 93. Lysine 144 carries the post-translational modification N6-acetyllysine.

The protein belongs to the globin family. In terms of assembly, heterotetramer of two alpha chains and two beta chains. In terms of tissue distribution, red blood cells.

Functionally, involved in oxygen transport from the lung to the various peripheral tissues. This chain is Hemoglobin subunit beta (HBB), found in Trichechus inunguis (Amazon manatee).